The sequence spans 128 residues: Glycine cleavage system H protein (128 aa).

The region spanning 22-104 is the Lipoyl-binding domain; it reads AIVVGITDFA…YEEGWMITIE (83 aa). Position 63 is an N6-lipoyllysine (Lys-63).

This sequence belongs to the GcvH family. In terms of assembly, the glycine cleavage system is composed of four proteins: P, T, L and H. Requires (R)-lipoate as cofactor.

Its function is as follows. The glycine cleavage system catalyzes the degradation of glycine. The H protein shuttles the methylamine group of glycine from the P protein to the T protein. This Anaeromyxobacter dehalogenans (strain 2CP-1 / ATCC BAA-258) protein is Glycine cleavage system H protein.